A 229-amino-acid chain; its full sequence is Cytidylate kinase (229 aa).

12–20 contacts ATP; sequence GPSGAGKGT.

This sequence belongs to the cytidylate kinase family. Type 1 subfamily.

It is found in the cytoplasm. The catalysed reaction is CMP + ATP = CDP + ADP. It carries out the reaction dCMP + ATP = dCDP + ADP. The chain is Cytidylate kinase from Serratia proteamaculans (strain 568).